The primary structure comprises 274 residues: Small ribosomal subunit protein uS2 (274 aa).

The tract at residues 255–274 (AEAESEDKGEVLYSFDDEEE) is disordered.

Belongs to the universal ribosomal protein uS2 family.

The polypeptide is Small ribosomal subunit protein uS2 (Gloeobacter violaceus (strain ATCC 29082 / PCC 7421)).